The sequence spans 132 residues: DNA-directed RNA polymerase subunit Rpo8 (132 aa).

The protein belongs to the archaeal Rpo8 RNA polymerase subunit family. As to quaternary structure, part of the 13-subunit RNA polymerase complex.

It localises to the cytoplasm. The enzyme catalyses RNA(n) + a ribonucleoside 5'-triphosphate = RNA(n+1) + diphosphate. Its function is as follows. DNA-dependent RNA polymerase (RNAP) catalyzes the transcription of DNA into RNA using the four ribonucleoside triphosphates as substrates. The chain is DNA-directed RNA polymerase subunit Rpo8 from Saccharolobus solfataricus (strain ATCC 35092 / DSM 1617 / JCM 11322 / P2) (Sulfolobus solfataricus).